The following is a 499-amino-acid chain: Probable alkaline/neutral invertase F (499 aa).

Phosphoserine is present on S11. T20 is subject to Phosphothreonine. Phosphoserine is present on S497.

Belongs to the glycosyl hydrolase 100 family.

It carries out the reaction Hydrolysis of terminal non-reducing beta-D-fructofuranoside residues in beta-D-fructofuranosides.. In terms of biological role, invertase that cleaves sucrose into glucose and fructose. This chain is Probable alkaline/neutral invertase F, found in Arabidopsis thaliana (Mouse-ear cress).